A 355-amino-acid chain; its full sequence is MSLFDTINAGGAQLLGVAWPTVWALVRILVVAVVILLCVAYLILWERKLIGWMHVRLGPNRVGPAGLLQPIADVLKLLLKEVIQPSAASRWLYLVAPVMTVVPAFAVWAVIPFQAQAVLANVNAGLLYAMAISSIGVYAVILAGWASNSKYAFLGAMRAAAQMVSYEISMGFALVLVLMTAGSLNLSEIVGSQQHGFFAGHGVNFLSWNWLPLLPAFVVYFVSGIAETNRHPFDVVEGESEIVAGHMIDYSGMAFALFFLAEYINMIVISALAATLFLGGWDAPFEFLSFIPGIFWLVLKVFALLSVFIWVRATFPRYRYDQIMRLGWKVFLPVTVIWVVVVGFWMMSPLNIWVK.

Helical transmembrane passes span 25 to 45 (LVRILVVAVVILLCVAYLILW), 91 to 111 (WLYLVAPVMTVVPAFAVWAVI), 126 to 146 (LLYAMAISSIGVYAVILAGWA), 170 to 190 (MGFALVLVLMTAGSLNLSEIV), 205 to 225 (FLSWNWLPLLPAFVVYFVSGI), 253 to 273 (MAFALFFLAEYINMIVISALA), 290 to 310 (FIPGIFWLVLKVFALLSVFIW), and 330 to 350 (VFLPVTVIWVVVVGFWMMSPL).

Belongs to the complex I subunit 1 family. NDH-1 is composed of 14 different subunits. Subunits NuoA, H, J, K, L, M, N constitute the membrane sector of the complex.

It is found in the cell inner membrane. The enzyme catalyses a quinone + NADH + 5 H(+)(in) = a quinol + NAD(+) + 4 H(+)(out). In terms of biological role, NDH-1 shuttles electrons from NADH, via FMN and iron-sulfur (Fe-S) centers, to quinones in the respiratory chain. The immediate electron acceptor for the enzyme in this species is believed to be ubiquinone. Couples the redox reaction to proton translocation (for every two electrons transferred, four hydrogen ions are translocated across the cytoplasmic membrane), and thus conserves the redox energy in a proton gradient. This subunit may bind ubiquinone. This chain is NADH-quinone oxidoreductase subunit H, found in Burkholderia vietnamiensis (strain G4 / LMG 22486) (Burkholderia cepacia (strain R1808)).